A 192-amino-acid polypeptide reads, in one-letter code: uncharacterized protein (192 aa).

One can recognise a Nudix hydrolase domain in the interval 29 to 160 (QRQAAVLIPV…PLDVYRRGNS (132 aa)). Residues 67-89 (GAVDSTDASLIAAALREAQEEVA) carry the Nudix box motif. Glu-83 and Glu-87 together coordinate Mg(2+).

The protein belongs to the Nudix hydrolase family. PCD1 subfamily. Mn(2+) serves as cofactor. Requires Mg(2+) as cofactor.

Functionally, probably mediates the hydrolysis of some nucleoside diphosphate derivatives. This is an uncharacterized protein from Salmonella dublin (strain CT_02021853).